Reading from the N-terminus, the 543-residue chain is Protein male-specific lethal-3 (543 aa).

The region spanning 10 to 90 (LFNRGEKVLC…KLQRELAEAA (81 aa)) is the Chromo domain. Residues 93–247 (QKTGGYSYKD…THTTDAEKRI (155 aa)) are disordered. Composition is skewed to basic and acidic residues over residues 180–202 (RSRD…DNSS), 210–224 (KSKG…ERRS), and 234–247 (SPKD…EKRI). The 294-residue stretch at 249–542 (QEDRVMLRIS…PLIDQGRELS (294 aa)) folds into the MRG domain.

As to quaternary structure, component of the male-specific lethal (MSL) histone acetyltransferase complex, composed of mof, mle, msl-1, msl-2 and msl-3 proteins, as well as roX1 and roX2 non-coding RNAs. In terms of processing, ubiquitinated by msl-2.

The protein resides in the nucleus. It localises to the chromosome. Its function is as follows. Component of the male-specific lethal (MSL) histone acetyltransferase complex, a multiprotein complex essential for elevating transcription of the single X chromosome in the male (X chromosome dosage compensation). The MSL complex specifically associates with the single X chromosome in males and mediates formation of H4K16ac, promoting a two-fold activation of X chromosome. Acts as a histone reader that specifically recognizes and binds histone H3 trimethylated at 'Lys-36' (H3K36me3) and histone H4 monomethylated at 'Lys-20' (H4K20me1). Within the MSL complex, mediates the spreading of the MSL complex from initiation sites on the male X chromosome to flanking chromatin. Following initial recruitment of the MSL complex to male X chromosome by msl-2, msl-3 binds H3K36me3 and promotes spreading of the MSL complex in cis. In addition to its role in dosage compensation in males, promotes germline stem cell differentiation in females: recognizes and binds H3K36me3, promoting recruitment of the ATAC complex and transcription of genes, such as RpS19b. In Drosophila virilis (Fruit fly), this protein is Protein male-specific lethal-3 (msl-3).